A 367-amino-acid polypeptide reads, in one-letter code: 3-isopropylmalate dehydrogenase (367 aa).

An NAD(+)-binding site is contributed by 75-88 (GPKWDGIERSKRPE). Substrate is bound by residues arginine 95, arginine 105, arginine 133, and aspartate 230. Positions 230, 254, and 258 each coordinate Mg(2+). 288-300 (GSAPDIAGQDIAN) contacts NAD(+).

It belongs to the isocitrate and isopropylmalate dehydrogenases family. LeuB type 1 subfamily. In terms of assembly, homodimer. It depends on Mg(2+) as a cofactor. The cofactor is Mn(2+).

It is found in the cytoplasm. The catalysed reaction is (2R,3S)-3-isopropylmalate + NAD(+) = 4-methyl-2-oxopentanoate + CO2 + NADH. It participates in amino-acid biosynthesis; L-leucine biosynthesis; L-leucine from 3-methyl-2-oxobutanoate: step 3/4. In terms of biological role, catalyzes the oxidation of 3-carboxy-2-hydroxy-4-methylpentanoate (3-isopropylmalate) to 3-carboxy-4-methyl-2-oxopentanoate. The product decarboxylates to 4-methyl-2 oxopentanoate. This is 3-isopropylmalate dehydrogenase from Psychrobacter cryohalolentis (strain ATCC BAA-1226 / DSM 17306 / VKM B-2378 / K5).